The primary structure comprises 387 residues: 1-deoxy-D-xylulose 5-phosphate reductoisomerase (387 aa).

Thr10, Gly11, Ile13, Asn38, and Asn122 together coordinate NADPH. A 1-deoxy-D-xylulose 5-phosphate-binding site is contributed by Lys123. NADPH is bound at residue Glu124. Asp148 lines the Mn(2+) pocket. Residues Ser149, Glu150, Ser174, and His197 each contribute to the 1-deoxy-D-xylulose 5-phosphate site. Glu150 is a binding site for Mn(2+). Gly203 lines the NADPH pocket. The 1-deoxy-D-xylulose 5-phosphate site is built by Ser210, Asn215, Lys216, and Glu219. Glu219 contacts Mn(2+).

It belongs to the DXR family. It depends on Mg(2+) as a cofactor. Mn(2+) is required as a cofactor.

It catalyses the reaction 2-C-methyl-D-erythritol 4-phosphate + NADP(+) = 1-deoxy-D-xylulose 5-phosphate + NADPH + H(+). Its pathway is isoprenoid biosynthesis; isopentenyl diphosphate biosynthesis via DXP pathway; isopentenyl diphosphate from 1-deoxy-D-xylulose 5-phosphate: step 1/6. Its function is as follows. Catalyzes the NADPH-dependent rearrangement and reduction of 1-deoxy-D-xylulose-5-phosphate (DXP) to 2-C-methyl-D-erythritol 4-phosphate (MEP). This chain is 1-deoxy-D-xylulose 5-phosphate reductoisomerase, found in Ehrlichia ruminantium (strain Welgevonden).